Here is a 294-residue protein sequence, read N- to C-terminus: Flavin-dependent thymidylate synthase (294 aa).

The 224-residue stretch at 27-250 (GFIRVIDYMG…PFTYEAFEEY (224 aa)) folds into the ThyX domain. FAD-binding positions include Thr-73, 96 to 98 (RHR), and Glu-104. Residues 93-96 (QWIR), 104-108 (EYSAR), and Arg-189 contribute to the dUMP site. The short motif at 96 to 106 (RHRTASVNEYS) is the ThyX motif element. Residues 205-207 (NLH) and His-211 each bind FAD. DUMP is bound at residue Arg-216. Arg-216 serves as the catalytic Involved in ionization of N3 of dUMP, leading to its activation.

This sequence belongs to the thymidylate synthase ThyX family. As to quaternary structure, homotetramer. Requires FAD as cofactor.

It catalyses the reaction dUMP + (6R)-5,10-methylene-5,6,7,8-tetrahydrofolate + NADPH + H(+) = dTMP + (6S)-5,6,7,8-tetrahydrofolate + NADP(+). It participates in pyrimidine metabolism; dTTP biosynthesis. Functionally, catalyzes the reductive methylation of 2'-deoxyuridine-5'-monophosphate (dUMP) to 2'-deoxythymidine-5'-monophosphate (dTMP) while utilizing 5,10-methylenetetrahydrofolate (mTHF) as the methyl donor, and NADPH and FADH(2) as the reductant. The protein is Flavin-dependent thymidylate synthase of Rickettsia bellii (strain RML369-C).